The chain runs to 261 residues: Kallikrein 1-related peptidase b3 (261 aa).

The N-terminal stretch at 1–18 (MWFLILFLALSLGGIDAA) is a signal peptide. A propeptide spans 19-24 (PPVQSR) (activation peptide). The segment B1 stretch occupies residues 25–107 (IVGGFKCEKN…HPGFNMSLMR (83 aa)). The Peptidase S1 domain occupies 25–258 (IVGGFKCEKN…FTSWIKDTMA (234 aa)). Disulfide bonds link Cys-31/Cys-173, Cys-50/Cys-66, Cys-152/Cys-219, Cys-184/Cys-198, and Cys-209/Cys-234. His-65 functions as the Charge relay system in the catalytic mechanism. Asn-102 is a glycosylation site (N-linked (GlcNAc...) asparagine). Positions 112–164 (FLEYDYSNDLMLLRLSKPADITDTVKPITLPTEEPKLGSTCLASGWGSITPTK) are segment C. The interval 112-261 (FLEYDYSNDL…WIKDTMAKNP (150 aa)) is segment A. The active-site Charge relay system is Asp-120. The segment at 165 to 261 (FQFTDDLYCV…WIKDTMAKNP (97 aa)) is segment B2. Ser-213 acts as the Charge relay system in catalysis. Zn(2+)-binding residues include His-231 and Glu-236.

This sequence belongs to the peptidase S1 family. Kallikrein subfamily. 7S nerve growth factor is composed of two alpha chains, a beta dimer composed of identical chains, and two gamma chains. Requires Zn(2+) as cofactor.

The enzyme catalyses Preferential cleavage of Arg-|-Xaa bonds in small molecule substrates. Highly selective action to release kallidin (lysyl-bradykinin) from kininogen involves hydrolysis of Met-|-Xaa or Leu-|-Xaa.. Functionally, 7S NGF alpha chain stabilizes the 7S complex. The beta dimer promotes neurite growth. The gamma chain is an arginine-specific protease; it may also have plasminogen activator activity, as well as mitogenic activity for chick embryo fibroblasts. This is Kallikrein 1-related peptidase b3 (Klk1b3) from Mus musculus (Mouse).